The chain runs to 71 residues: Small ribosomal subunit protein bS21 (71 aa).

Belongs to the bacterial ribosomal protein bS21 family.

The chain is Small ribosomal subunit protein bS21 from Shewanella sp. (strain MR-4).